Reading from the N-terminus, the 647-residue chain is DNA topoisomerase 4 subunit B (647 aa).

Residues tyrosine 11, asparagine 51, aspartate 78, 118 to 124 (GLHGVGS), and lysine 344 contribute to the ATP site. Basic and acidic residues predominate over residues 391–401 (AARKARDESRN). The tract at residues 391 to 421 (AARKARDESRNGKKNKKDKGLLSGKLTPAQS) is disordered. In terms of domain architecture, Toprim spans 427–541 (NELYLVEGDS…AGHVYIALPP (115 aa)). The Mg(2+) site is built by glutamate 433, aspartate 506, and aspartate 508.

It belongs to the type II topoisomerase family. ParE type 2 subfamily. Heterotetramer composed of ParC and ParE. The cofactor is Mg(2+). Mn(2+) is required as a cofactor. Requires Ca(2+) as cofactor.

It catalyses the reaction ATP-dependent breakage, passage and rejoining of double-stranded DNA.. Inhibited by quinolones, such as levofloxacin. Its function is as follows. Topoisomerase IV is essential for chromosome segregation. It relaxes supercoiled DNA. Performs the decatenation events required during the replication of a circular DNA molecule. This chain is DNA topoisomerase 4 subunit B, found in Streptococcus pneumoniae serotype 4 (strain ATCC BAA-334 / TIGR4).